The chain runs to 460 residues: Cyclic 2,3-diphosphoglycerate synthetase (460 aa).

In terms of assembly, homodimer.

It is found in the cytoplasm. It carries out the reaction (2R)-2,3-bisphosphoglycerate + ATP + H(+) = cyclic (2R)-2,3-bisphosphoglycerate + ADP + phosphate. Functionally, catalyzes the formation of cyclic 2,3-diphosphoglycerate (cDPG) by formation of an intramolecular phosphoanhydride bond at the expense of ATP. It is also able to catalyze the hydrolysis of cDPG but with significant slower rates (8-10 times). May be involved in thermoadaptation. The chain is Cyclic 2,3-diphosphoglycerate synthetase (cpgS) from Methanothermus fervidus (strain ATCC 43054 / DSM 2088 / JCM 10308 / V24 S).